The primary structure comprises 219 residues: 7-cyano-7-deazaguanine synthase (219 aa).

Residue Leu8–Leu18 participates in ATP binding. The Zn(2+) site is built by Cys185, Cys193, Cys196, and Cys199.

Belongs to the QueC family. Zn(2+) serves as cofactor.

It carries out the reaction 7-carboxy-7-deazaguanine + NH4(+) + ATP = 7-cyano-7-deazaguanine + ADP + phosphate + H2O + H(+). The protein operates within purine metabolism; 7-cyano-7-deazaguanine biosynthesis. Its function is as follows. Catalyzes the ATP-dependent conversion of 7-carboxy-7-deazaguanine (CDG) to 7-cyano-7-deazaguanine (preQ(0)). This Desulfotalea psychrophila (strain LSv54 / DSM 12343) protein is 7-cyano-7-deazaguanine synthase.